Reading from the N-terminus, the 347-residue chain is Heat-inducible transcription repressor HrcA (347 aa).

The protein belongs to the HrcA family.

In terms of biological role, negative regulator of class I heat shock genes (grpE-dnaK-dnaJ and groELS operons). Prevents heat-shock induction of these operons. The protein is Heat-inducible transcription repressor HrcA of Rhodococcus erythropolis (strain PR4 / NBRC 100887).